The following is a 428-amino-acid chain: Putative FBD-associated F-box protein At5g56390 (428 aa).

One can recognise an F-box domain in the interval 2–50 (DKISQLHDELLLGILSLLPNAKDVVATMVLSKRWRYLWMMVPSLVYDDS). Residues 344 to 394 (CWNETSLVPEYLLPSLETFEWVDYEGTKTEKQVVAFILRIASCLKQATIVS) form the FBD domain.

This Arabidopsis thaliana (Mouse-ear cress) protein is Putative FBD-associated F-box protein At5g56390.